Here is a 190-residue protein sequence, read N- to C-terminus: GTP cyclohydrolase 1 (190 aa).

Positions 75, 78, and 146 each coordinate Zn(2+).

This sequence belongs to the GTP cyclohydrolase I family. As to quaternary structure, toroid-shaped homodecamer, composed of two pentamers of five dimers.

It catalyses the reaction GTP + H2O = 7,8-dihydroneopterin 3'-triphosphate + formate + H(+). It participates in cofactor biosynthesis; 7,8-dihydroneopterin triphosphate biosynthesis; 7,8-dihydroneopterin triphosphate from GTP: step 1/1. The chain is GTP cyclohydrolase 1 from Campylobacter jejuni subsp. doylei (strain ATCC BAA-1458 / RM4099 / 269.97).